The primary structure comprises 149 residues: Transcriptional repressor NrdR (149 aa).

A zinc finger spans residues cysteine 3–cysteine 34. The 91-residue stretch at proline 49–aspartate 139 folds into the ATP-cone domain.

The protein belongs to the NrdR family. The cofactor is Zn(2+).

Its function is as follows. Negatively regulates transcription of bacterial ribonucleotide reductase nrd genes and operons by binding to NrdR-boxes. This chain is Transcriptional repressor NrdR, found in Verminephrobacter eiseniae (strain EF01-2).